The sequence spans 110 residues: MKILRPPFRALSDENGVTNTFFTVYVVELALRMSPMPISVQRKESGDAESVYQQVRQALEQGQPRLLEMTCEKVEGKRLSVLTSDVLAVQIYEKTAASGGSKRPGFSLDS.

It belongs to the UPF0367 family.

The sequence is that of UPF0367 protein sync_2587 from Synechococcus sp. (strain CC9311).